The primary structure comprises 207 residues: Large ribosomal subunit protein uL4 (207 aa).

The protein belongs to the universal ribosomal protein uL4 family. Part of the 50S ribosomal subunit.

Functionally, one of the primary rRNA binding proteins, this protein initially binds near the 5'-end of the 23S rRNA. It is important during the early stages of 50S assembly. It makes multiple contacts with different domains of the 23S rRNA in the assembled 50S subunit and ribosome. In terms of biological role, forms part of the polypeptide exit tunnel. The sequence is that of Large ribosomal subunit protein uL4 from Pelagibacter ubique (strain HTCC1062).